Reading from the N-terminus, the 75-residue chain is UPF0352 protein VSAL_I1058 (75 aa).

The protein belongs to the UPF0352 family.

The chain is UPF0352 protein VSAL_I1058 from Aliivibrio salmonicida (strain LFI1238) (Vibrio salmonicida (strain LFI1238)).